The sequence spans 593 residues: Arginine--tRNA ligase (593 aa).

The 'HIGH' region signature appears at 138-148 (ANPTGPLHVGH).

Belongs to the class-I aminoacyl-tRNA synthetase family. Monomer.

The protein localises to the cytoplasm. It catalyses the reaction tRNA(Arg) + L-arginine + ATP = L-arginyl-tRNA(Arg) + AMP + diphosphate. The protein is Arginine--tRNA ligase of Burkholderia lata (strain ATCC 17760 / DSM 23089 / LMG 22485 / NCIMB 9086 / R18194 / 383).